Reading from the N-terminus, the 381-residue chain is Chaperone protein DnaJ (381 aa).

Residues 5 to 70 form the J domain; the sequence is DYYDVLGVSK…EKKAAYDRFG (66 aa). A CR-type zinc finger spans residues 140-218; that stretch reads GLQKTINVPT…CRGQGRVEKD (79 aa). Zn(2+) contacts are provided by Cys-153, Cys-156, Cys-170, Cys-173, Cys-192, Cys-195, Cys-206, and Cys-209. CXXCXGXG motif repeat units lie at residues 153-160, 170-177, 192-199, and 206-213; these read CSSCEGTG, CPTCSGMG, CPTCSGLG, and CKSCRGQG.

The protein belongs to the DnaJ family. As to quaternary structure, homodimer. It depends on Zn(2+) as a cofactor.

It is found in the cytoplasm. In terms of biological role, participates actively in the response to hyperosmotic and heat shock by preventing the aggregation of stress-denatured proteins and by disaggregating proteins, also in an autonomous, DnaK-independent fashion. Unfolded proteins bind initially to DnaJ; upon interaction with the DnaJ-bound protein, DnaK hydrolyzes its bound ATP, resulting in the formation of a stable complex. GrpE releases ADP from DnaK; ATP binding to DnaK triggers the release of the substrate protein, thus completing the reaction cycle. Several rounds of ATP-dependent interactions between DnaJ, DnaK and GrpE are required for fully efficient folding. Also involved, together with DnaK and GrpE, in the DNA replication of plasmids through activation of initiation proteins. This Ruegeria pomeroyi (strain ATCC 700808 / DSM 15171 / DSS-3) (Silicibacter pomeroyi) protein is Chaperone protein DnaJ.